The chain runs to 562 residues: Probable E3 ubiquitin-protein ligase ARI7 (562 aa).

Residues 1-39 form a disordered region; sequence MDSEEDMLDAHDMESGEDDFYSGGTDDCNDSDDGEPDYG. The span at 27-39 shows a compositional bias: acidic residues; the sequence is DCNDSDDGEPDYG. The TRIAD supradomain stretch occupies residues 133 to 346; that stretch reads SELTCGICFD…GGFYACNRYE (214 aa). Zn(2+) contacts are provided by Cys137, Cys140, Cys154, His156, Cys159, Cys162, Cys182, Cys187, Cys226, Cys231, Cys248, Cys250, Cys255, Cys258, His263, Cys268, Cys295, and Cys298. Residues 137-187 form an RING-type 1 zinc finger; the sequence is CGICFDSYPPEKIASVSCGHPFCTTCWTGYISTTINDGPGCLMLRCPDPSC. The segment at 206–268 adopts an IBR-type zinc-finger fold; sequence EKYNRYFLRS…TEEAHRPVDC (63 aa). Residues 295 to 325 form an RING-type 2; atypical zinc finger; sequence CPRCKRPIEKNQGCMHMTCTPPCKYEFCWLC. Cys308 is a catalytic residue. Residues Cys313, Cys317, Cys322, Cys325, His332, and Cys342 each contribute to the Zn(2+) site. Residues 524 to 562 are disordered; sequence ACSSKSTSSKSTGCSSKTRGKGKGSSRTGGSSRNPDDNL. Residues 525 to 540 show a composition bias toward low complexity; sequence CSSKSTSSKSTGCSSK.

Belongs to the RBR family. Ariadne subfamily. It depends on Zn(2+) as a cofactor. Ubiquitous.

The enzyme catalyses [E2 ubiquitin-conjugating enzyme]-S-ubiquitinyl-L-cysteine + [acceptor protein]-L-lysine = [E2 ubiquitin-conjugating enzyme]-L-cysteine + [acceptor protein]-N(6)-ubiquitinyl-L-lysine.. It participates in protein modification; protein ubiquitination. Its function is as follows. Might act as an E3 ubiquitin-protein ligase, or as part of E3 complex, which accepts ubiquitin from specific E2 ubiquitin-conjugating enzymes and then transfers it to substrates. The polypeptide is Probable E3 ubiquitin-protein ligase ARI7 (ARI7) (Arabidopsis thaliana (Mouse-ear cress)).